The following is a 343-amino-acid chain: Dihydroorotate dehydrogenase (quinone) (343 aa).

Residues 65–69 (AGFDK) and Thr-89 contribute to the FMN site. Position 69 (Lys-69) interacts with substrate. 114-118 (NRMGF) is a substrate binding site. Residues Asn-145 and Asn-178 each coordinate FMN. Position 178 (Asn-178) interacts with substrate. Catalysis depends on Ser-181, which acts as the Nucleophile. Asn-183 provides a ligand contact to substrate. FMN is bound by residues Lys-215 and Thr-243. 244 to 245 (NT) serves as a coordination point for substrate. FMN-binding positions include Gly-269, Gly-298, and 319–320 (YT).

This sequence belongs to the dihydroorotate dehydrogenase family. Type 2 subfamily. Monomer. Requires FMN as cofactor.

The protein localises to the cell membrane. It carries out the reaction (S)-dihydroorotate + a quinone = orotate + a quinol. The protein operates within pyrimidine metabolism; UMP biosynthesis via de novo pathway; orotate from (S)-dihydroorotate (quinone route): step 1/1. Its function is as follows. Catalyzes the conversion of dihydroorotate to orotate with quinone as electron acceptor. This Leifsonia xyli subsp. xyli (strain CTCB07) protein is Dihydroorotate dehydrogenase (quinone).